The sequence spans 179 residues: Protein LDB18 (179 aa).

Its function is as follows. May be involved in protein-linked oligosaccharide phosphorylation since the deletion reduces the negative charge of the cell surface. The sequence is that of Protein LDB18 (LDB18) from Saccharomyces cerevisiae (strain ATCC 204508 / S288c) (Baker's yeast).